Here is a 915-residue protein sequence, read N- to C-terminus: Nitrate reductase [NADH] (915 aa).

The interval 1-102 (MAASVEPRQP…PRDEGTADAW (102 aa)) is disordered. Residues 16–26 (APATAPTARAP) show a composition bias toward low complexity. Positions 57–71 (AEEEEDDDDEDDEGH) are enriched in acidic residues. Over residues 88-97 (PSTRDPRDEG) the composition is skewed to basic and acidic residues. Cys189 provides a ligand contact to Mo-molybdopterin. Positions 538 to 613 (DKQFTMSEVR…LDTYRIGELI (76 aa)) constitute a Cytochrome b5 heme-binding domain. Positions 573 and 596 each coordinate heme. In terms of domain architecture, FAD-binding FR-type spans 654–767 (REKVPCRLVD…KGPLGHVEYT (114 aa)). FAD-binding positions include 706 to 709 (RAYT), 723 to 727 (LVKVY), Phe728, Phe735, 740 to 742 (LMT), Ser791, and Thr794.

This sequence belongs to the nitrate reductase family. In terms of assembly, homodimer. The cofactor is FAD. Requires heme as cofactor. Mo-molybdopterin is required as a cofactor.

The enzyme catalyses nitrite + NAD(+) + H2O = nitrate + NADH + H(+). In terms of biological role, nitrate reductase is a key enzyme involved in the first step of nitrate assimilation in plants, fungi and bacteria. This chain is Nitrate reductase [NADH], found in Hordeum vulgare (Barley).